The following is a 264-amino-acid chain: 3-methyl-2-oxobutanoate hydroxymethyltransferase (264 aa).

Mg(2+) is bound by residues aspartate 45 and aspartate 84. 3-methyl-2-oxobutanoate is bound by residues 45-46 (DS), aspartate 84, and lysine 112. Glutamate 114 lines the Mg(2+) pocket. The active-site Proton acceptor is glutamate 181.

This sequence belongs to the PanB family. Homodecamer; pentamer of dimers. The cofactor is Mg(2+).

Its subcellular location is the cytoplasm. The catalysed reaction is 3-methyl-2-oxobutanoate + (6R)-5,10-methylene-5,6,7,8-tetrahydrofolate + H2O = 2-dehydropantoate + (6S)-5,6,7,8-tetrahydrofolate. Its pathway is cofactor biosynthesis; (R)-pantothenate biosynthesis; (R)-pantoate from 3-methyl-2-oxobutanoate: step 1/2. In terms of biological role, catalyzes the reversible reaction in which hydroxymethyl group from 5,10-methylenetetrahydrofolate is transferred onto alpha-ketoisovalerate to form ketopantoate. The chain is 3-methyl-2-oxobutanoate hydroxymethyltransferase from Erwinia tasmaniensis (strain DSM 17950 / CFBP 7177 / CIP 109463 / NCPPB 4357 / Et1/99).